Reading from the N-terminus, the 406-residue chain is tRNA-specific 2-thiouridylase MnmA (406 aa).

ATP is bound by residues 42 to 49 (GLSGGVDS) and Leu-68. Cys-129 serves as the catalytic Nucleophile. Cys-129 and Cys-237 are disulfide-bonded. Gly-154 contributes to the ATP binding site. Positions 187-189 (KDQ) are interaction with tRNA. Residue Cys-237 is the Cysteine persulfide intermediate of the active site. Positions 342-343 (RY) are interaction with tRNA.

It belongs to the MnmA/TRMU family.

Its subcellular location is the cytoplasm. The enzyme catalyses S-sulfanyl-L-cysteinyl-[protein] + uridine(34) in tRNA + AH2 + ATP = 2-thiouridine(34) in tRNA + L-cysteinyl-[protein] + A + AMP + diphosphate + H(+). Its function is as follows. Catalyzes the 2-thiolation of uridine at the wobble position (U34) of tRNA, leading to the formation of s(2)U34. The protein is tRNA-specific 2-thiouridylase MnmA of Prochlorococcus marinus (strain MIT 9211).